The chain runs to 547 residues: Large cysteine-rich periplasmic protein OmcB, serovar C (547 aa).

Positions 1 to 22 are cleaved as a signal peptide; that stretch reads MNKLIRRAVTIFAVTSVASLFA. A propeptide spanning residues 23-40 is cleaved from the precursor; it reads SGVLETSMAESLSTNVIS. The interval 45-84 is disordered; the sequence is KAKDNTSHKSKKARKNHSKETPVDRKEVAPVHESKATGPK. Residues 52–61 are compositionally biased toward basic residues; the sequence is HKSKKARKNH. Residues 62-79 are compositionally biased toward basic and acidic residues; sequence SKETPVDRKEVAPVHESK.

As to quaternary structure, part of a disulfide cross-linked outer membrane complex (COMC) composed of the major outer membrane porin (MOMP), the small cysteine-rich protein (OmcA) and the large cysteine-rich periplasmic protein (OmcB).

It is found in the periplasm. In terms of biological role, in elementary bodies (EBs, the infectious stage, which is able to survive outside the host cell) provides the structural integrity of the outer envelope through disulfide cross-links with the small cysteine-rich protein and the major outer membrane porin. It has been described in publications as the Sarkosyl-insoluble COMC (Chlamydia outer membrane complex), and serves as the functional equivalent of peptidoglycan. The chain is Large cysteine-rich periplasmic protein OmcB, serovar C (omcB) from Chlamydia trachomatis.